A 385-amino-acid chain; its full sequence is MAALSRVRWLTRALVAAPNPGAWRSLCTSTVAQASSRTQGEDVRVEGAFPVTMLPGDGVGPELMHAVKEVFKAASVPVEFQEHHLSEVQNMASEEKLEQVLSSMKENKVAIIGKIHTPMEYKGELASYDMRLRRKLDLFANVVHVKSLPGYKTRHNNLDLVIIREQTEGEYSSLEHESARGVIECLKIVTRTKSQRIAKFAFDYATKKGRGKVTAVHKANIMKLGDGLFLQCCEEVAELYPKIKFEKMIIDNCCMQLVQNPYQFDVLVMPNLYGNIIDNLAAGLVGGAGVVPGESYSAEYAVFETGARHPFAQAVGRNIANPTAMLLSASNMLRHLNLEHHSNMIAEAVKKVIKVGKVRTRDMGGYSTTTDFIKSVIGHLHPYGG.

The transit peptide at 1–33 directs the protein to the mitochondrion; sequence MAALSRVRWLTRALVAAPNPGAWRSLCTSTVAQ. N6-acetyllysine is present on Lys199.

Belongs to the isocitrate and isopropylmalate dehydrogenases family. In terms of assembly, heterooligomer of subunits alpha (IDH3A), beta (IDH3B), and gamma (IDH3G) in the apparent ratio of 2:1:1. The heterodimer containing one IDH3A and one IDH3B subunit and the heterodimer containing one IDH3A and one IDH3G subunit assemble into a heterotetramer (which contains two subunits of IDH3A, one of IDH3B and one of IDH3G) and further into the heterooctamer. In terms of tissue distribution, isoform A is predominant in heart muscle; also found in brain, kidney and liver. Isoform B is present in kidney and liver.

It is found in the mitochondrion. Its activity is regulated as follows. The heterotetramer and the heterodimer composed of IDH3A and IDH3G subunits can be allosterically activated by citrate (CIT) or/and ADP, and the two activators can act independently or synergistically. The heterodimer composed of IDH3A and IDH3B subunits cannot be allosterically regulated and the allosteric regulation of the heterotetramer is through the IDH3G subunit and not the IDH3B subunit. The IDH3G subunit contains the allosteric site which consists of a CIT-binding site and an ADP-binding site, and the binding of CIT and ADP causes conformational changes at the allosteric site which are transmitted to the active site in the catalytic subunit (IDH3A) through a cascade of conformational changes at the heterodimer interface, leading to stabilization of the isocitrate-binding at the active site and thus activation of the enzyme. ATP can activate the heterotetramer and the heterodimer composed of IDH3A and IDH3G subunits at low concentrations but inhibits their activities at high concentrations, whereas ATP exhibits only inhibitory effect on the heterodimer composed of IDH3A and IDH3B subunits. Its function is as follows. Plays a structural role to facilitate the assembly and ensure the full activity of the enzyme catalyzing the decarboxylation of isocitrate (ICT) into alpha-ketoglutarate. The heterodimer composed of the alpha (IDH3A) and beta (IDH3B) subunits and the heterodimer composed of the alpha (IDH3A) and gamma (IDH3G) subunits, have considerable basal activity but the full activity of the heterotetramer (containing two subunits of IDH3A, one of IDH3B and one of IDH3G) requires the assembly and cooperative function of both heterodimers. The polypeptide is Isocitrate dehydrogenase [NAD] subunit beta, mitochondrial (IDH3B) (Bos taurus (Bovine)).